Reading from the N-terminus, the 292-residue chain is Elongation factor Ts (292 aa).

Residues 82 to 85 form an involved in Mg(2+) ion dislocation from EF-Tu region; it reads TDFV.

It belongs to the EF-Ts family.

Its subcellular location is the cytoplasm. Its function is as follows. Associates with the EF-Tu.GDP complex and induces the exchange of GDP to GTP. It remains bound to the aminoacyl-tRNA.EF-Tu.GTP complex up to the GTP hydrolysis stage on the ribosome. The protein is Elongation factor Ts of Bordetella bronchiseptica (strain ATCC BAA-588 / NCTC 13252 / RB50) (Alcaligenes bronchisepticus).